We begin with the raw amino-acid sequence, 193 residues long: Probable GTP-binding protein EngB (193 aa).

The EngB-type G domain occupies 22 to 193 (QLPEFALAGR…EAWGALQKWM (172 aa)). GTP-binding positions include 30–37 (GRSNVGKS), 57–61 (GKTQT), 75–78 (DVPG), 142–145 (TKAD), and 174–176 (FSA). Residues S37 and T59 each coordinate Mg(2+).

The protein belongs to the TRAFAC class TrmE-Era-EngA-EngB-Septin-like GTPase superfamily. EngB GTPase family. Requires Mg(2+) as cofactor.

Its function is as follows. Necessary for normal cell division and for the maintenance of normal septation. This Anoxybacillus flavithermus (strain DSM 21510 / WK1) protein is Probable GTP-binding protein EngB.